The chain runs to 227 residues: Cytochrome c oxidase subunit 2 (227 aa).

At 1–14 the chain is on the mitochondrial intermembrane side; it reads MAHPLQLGLQDASS. The helical transmembrane segment at 15–45 threads the bilayer; the sequence is PIMEELLYFHDHALMIVFLISSLVLYTISLM. At 46–59 the chain is on the mitochondrial matrix side; sequence LTTKLMHTSTMNAQ. Residues 60-87 form a helical membrane-spanning segment; it reads MVETMWTILPAVILTSIALPSLRILYMT. At 88 to 227 the chain is on the mitochondrial intermembrane side; that stretch reads DEINNPLLTI…HFETWSTLTS (140 aa). Positions 161, 196, 198, 200, 204, and 207 each coordinate Cu cation. A Mg(2+)-binding site is contributed by Glu198.

This sequence belongs to the cytochrome c oxidase subunit 2 family. Component of the cytochrome c oxidase (complex IV, CIV), a multisubunit enzyme composed of 14 subunits. The complex is composed of a catalytic core of 3 subunits MT-CO1, MT-CO2 and MT-CO3, encoded in the mitochondrial DNA, and 11 supernumerary subunits COX4I, COX5A, COX5B, COX6A, COX6B, COX6C, COX7A, COX7B, COX7C, COX8 and NDUFA4, which are encoded in the nuclear genome. The complex exists as a monomer or a dimer and forms supercomplexes (SCs) in the inner mitochondrial membrane with NADH-ubiquinone oxidoreductase (complex I, CI) and ubiquinol-cytochrome c oxidoreductase (cytochrome b-c1 complex, complex III, CIII), resulting in different assemblies (supercomplex SCI(1)III(2)IV(1) and megacomplex MCI(2)III(2)IV(2)). Found in a complex with TMEM177, COA6, COX18, COX20, SCO1 and SCO2. Interacts with TMEM177 in a COX20-dependent manner. Interacts with COX20. Interacts with COX16. It depends on Cu cation as a cofactor.

Its subcellular location is the mitochondrion inner membrane. The catalysed reaction is 4 Fe(II)-[cytochrome c] + O2 + 8 H(+)(in) = 4 Fe(III)-[cytochrome c] + 2 H2O + 4 H(+)(out). Its function is as follows. Component of the cytochrome c oxidase, the last enzyme in the mitochondrial electron transport chain which drives oxidative phosphorylation. The respiratory chain contains 3 multisubunit complexes succinate dehydrogenase (complex II, CII), ubiquinol-cytochrome c oxidoreductase (cytochrome b-c1 complex, complex III, CIII) and cytochrome c oxidase (complex IV, CIV), that cooperate to transfer electrons derived from NADH and succinate to molecular oxygen, creating an electrochemical gradient over the inner membrane that drives transmembrane transport and the ATP synthase. Cytochrome c oxidase is the component of the respiratory chain that catalyzes the reduction of oxygen to water. Electrons originating from reduced cytochrome c in the intermembrane space (IMS) are transferred via the dinuclear copper A center (CU(A)) of subunit 2 and heme A of subunit 1 to the active site in subunit 1, a binuclear center (BNC) formed by heme A3 and copper B (CU(B)). The BNC reduces molecular oxygen to 2 water molecules using 4 electrons from cytochrome c in the IMS and 4 protons from the mitochondrial matrix. The protein is Cytochrome c oxidase subunit 2 (MT-CO2) of Galeopterus variegatus (Malayan flying lemur).